We begin with the raw amino-acid sequence, 281 residues long: NADH--cytochrome b5 reductase 1 (281 aa).

A helical membrane pass occupies residues 13–33 (ILLGVFVAFVAVGAGAAYFLT). The AKR2A-binding sequence (ABS) required for mitochondrion outer membrane targeting motif lies at 34-40 (SSKKRRV). The 105-residue stretch at 45–149 (ENFKEFKLVK…KGPKGRFKYQ (105 aa)) folds into the FAD-binding FR-type domain. FAD contacts are provided by residues 129 to 144 (REMRVGDHLAVKGPKG) and 155 to 187 (AFGMLAGGSGITPMFQVARAILENPTDKTKVHL). Thr166 is subject to Phosphothreonine.

This sequence belongs to the flavoprotein pyridine nucleotide cytochrome reductase family. As to quaternary structure, monomer. Interacts with AKR2A. FAD serves as cofactor. In terms of tissue distribution, expressed in roots, stems, flowers and siliques. Detected in leaves.

It is found in the mitochondrion outer membrane. It catalyses the reaction 2 Fe(III)-[cytochrome b5] + NADH = 2 Fe(II)-[cytochrome b5] + NAD(+) + H(+). Its function is as follows. Reductase transferring electrons from NADH to cytochrome b5. Required for the NADH-dependent electron transfer involved in the desaturation and hydroxylation of fatty acids and in the desaturation of sterol precursors. No activity with NADPH as electron donor. The sequence is that of NADH--cytochrome b5 reductase 1 from Arabidopsis thaliana (Mouse-ear cress).